We begin with the raw amino-acid sequence, 533 residues long: Lysine--tRNA ligase 1 (533 aa).

The 'HIGH' region signature appears at 26–34 (PSGHIHIGN). The 'KMSKS' region motif lies at 272–276 (AMSSS).

It belongs to the class-I aminoacyl-tRNA synthetase family.

It localises to the cytoplasm. It carries out the reaction tRNA(Lys) + L-lysine + ATP = L-lysyl-tRNA(Lys) + AMP + diphosphate. The polypeptide is Lysine--tRNA ligase 1 (Methanosarcina acetivorans (strain ATCC 35395 / DSM 2834 / JCM 12185 / C2A)).